The chain runs to 501 residues: Geissoschizine oxidase (501 aa).

The helical transmembrane segment at 1-21 (MEFSFSSPLLYILYFLLFFIV) threads the bilayer. Residue C442 coordinates heme.

It belongs to the cytochrome P450 family. Heme serves as cofactor.

Its subcellular location is the membrane. It catalyses the reaction (19E)-geissoschizine + reduced [NADPH--hemoprotein reductase] + O2 = akuammicine + formate + oxidized [NADPH--hemoprotein reductase] + H2O + H(+). Its pathway is alkaloid biosynthesis. Its function is as follows. A cytochrome P450 monooxygenase involved in the biosynthesis of strychnos monoterpene indole alkaloids (MIAs) natural products, compounds with effects on glucose absorption. Catalyzes the conversion of geissoschizine to akuammicine. The protein is Geissoschizine oxidase of Alstonia scholaris (Dogbane).